Consider the following 340-residue polypeptide: MIQNEIPIPAEALQWKCIESKIDSERLHYGRFAISPLRPGQANTVGIAIRRALLGEIEGTCITYVKFEKVTHEYSTIMGIQESVHDILINLKEIVLKSNSYKTQEASISILGPKRVTAEDIVLPSSVEVIDATQHIATITKAVYFNIKLGIRKDRGYRIENPVKYEDGNFAVNAAFTPIRNANYSVHSFENEKEKQEILFIEVWTNGSLTPKEALREASQSLINLFIPLLHEKKERENRKLENKDEYNVLRSCFSLTNIGEVRKEISFKHIFIDQLELPARAYNGLKKVDVHTISDLLNYSQEDLMKIKNFGKKSIQQVVEALQKHFAIHLPKNKFSIND.

The tract at residues 1–233 is alpha N-terminal domain (alpha-NTD); sequence MIQNEIPIPA…NLFIPLLHEK (233 aa). Positions 263-340 are alpha C-terminal domain (alpha-CTD); sequence RKEISFKHIF…LPKNKFSIND (78 aa).

It belongs to the RNA polymerase alpha chain family. In plastids the minimal PEP RNA polymerase catalytic core is composed of four subunits: alpha, beta, beta', and beta''. When a (nuclear-encoded) sigma factor is associated with the core the holoenzyme is formed, which can initiate transcription.

It localises to the plastid. The protein localises to the chloroplast. The catalysed reaction is RNA(n) + a ribonucleoside 5'-triphosphate = RNA(n+1) + diphosphate. Functionally, DNA-dependent RNA polymerase catalyzes the transcription of DNA into RNA using the four ribonucleoside triphosphates as substrates. This Anthoceros angustus (Hornwort) protein is DNA-directed RNA polymerase subunit alpha (rpoA).